A 168-amino-acid polypeptide reads, in one-letter code: 6,7-dimethyl-8-ribityllumazine synthase (168 aa).

5-amino-6-(D-ribitylamino)uracil-binding positions include Phe-24, 58-60, and 82-84; these read ALE and AVI. Position 87-88 (87-88) interacts with (2S)-2-hydroxy-3-oxobutyl phosphate; sequence ET. Catalysis depends on His-90, which acts as the Proton donor. Position 115 (Asn-115) interacts with 5-amino-6-(D-ribitylamino)uracil. Residue Arg-129 coordinates (2S)-2-hydroxy-3-oxobutyl phosphate.

It belongs to the DMRL synthase family.

The enzyme catalyses (2S)-2-hydroxy-3-oxobutyl phosphate + 5-amino-6-(D-ribitylamino)uracil = 6,7-dimethyl-8-(1-D-ribityl)lumazine + phosphate + 2 H2O + H(+). It functions in the pathway cofactor biosynthesis; riboflavin biosynthesis; riboflavin from 2-hydroxy-3-oxobutyl phosphate and 5-amino-6-(D-ribitylamino)uracil: step 1/2. Its function is as follows. Catalyzes the formation of 6,7-dimethyl-8-ribityllumazine by condensation of 5-amino-6-(D-ribitylamino)uracil with 3,4-dihydroxy-2-butanone 4-phosphate. This is the penultimate step in the biosynthesis of riboflavin. In Paraburkholderia phytofirmans (strain DSM 17436 / LMG 22146 / PsJN) (Burkholderia phytofirmans), this protein is 6,7-dimethyl-8-ribityllumazine synthase.